A 202-amino-acid polypeptide reads, in one-letter code: Pyridoxal 5'-phosphate synthase subunit PdxT (202 aa).

Residue 49-51 (GES) participates in L-glutamine binding. The Nucleophile role is filled by Cys81. L-glutamine is bound by residues Arg110 and 139-140 (IR). Catalysis depends on charge relay system residues His182 and Glu184.

This sequence belongs to the glutaminase PdxT/SNO family. As to quaternary structure, in the presence of PdxS, forms a dodecamer of heterodimers. Only shows activity in the heterodimer.

It catalyses the reaction aldehydo-D-ribose 5-phosphate + D-glyceraldehyde 3-phosphate + L-glutamine = pyridoxal 5'-phosphate + L-glutamate + phosphate + 3 H2O + H(+). It carries out the reaction L-glutamine + H2O = L-glutamate + NH4(+). It participates in cofactor biosynthesis; pyridoxal 5'-phosphate biosynthesis. Its function is as follows. Catalyzes the hydrolysis of glutamine to glutamate and ammonia as part of the biosynthesis of pyridoxal 5'-phosphate. The resulting ammonia molecule is channeled to the active site of PdxS. In Rhodococcus jostii (strain RHA1), this protein is Pyridoxal 5'-phosphate synthase subunit PdxT.